The following is a 257-amino-acid chain: Aspartate/glutamate leucyltransferase (257 aa).

The protein belongs to the R-transferase family. Bpt subfamily.

The protein resides in the cytoplasm. It catalyses the reaction N-terminal L-glutamyl-[protein] + L-leucyl-tRNA(Leu) = N-terminal L-leucyl-L-glutamyl-[protein] + tRNA(Leu) + H(+). The enzyme catalyses N-terminal L-aspartyl-[protein] + L-leucyl-tRNA(Leu) = N-terminal L-leucyl-L-aspartyl-[protein] + tRNA(Leu) + H(+). Its function is as follows. Functions in the N-end rule pathway of protein degradation where it conjugates Leu from its aminoacyl-tRNA to the N-termini of proteins containing an N-terminal aspartate or glutamate. The protein is Aspartate/glutamate leucyltransferase of Sphingopyxis alaskensis (strain DSM 13593 / LMG 18877 / RB2256) (Sphingomonas alaskensis).